Here is a 324-residue protein sequence, read N- to C-terminus: Viral cathepsin (324 aa).

Positions 1–16 (MNKIVLYLLVYGATLG) are cleaved as a signal peptide. Positions 17-113 (AAYDLLKAPS…VVLDRPPDKG (97 aa)) are cleaved as a propeptide — activation peptide. Intrachain disulfides connect Cys-134/Cys-175, Cys-168/Cys-208, and Cys-263/Cys-311. Residue Cys-137 is part of the active site. Asn-159 is a glycosylation site (N-linked (GlcNAc...) asparagine; by host). Catalysis depends on residues His-270 and Asn-290.

It belongs to the peptidase C1 family. Post-translationally, synthesized as an inactive proenzyme and activated by proteolytic removal of the inhibitory propeptide.

The catalysed reaction is Endopeptidase of broad specificity, hydrolyzing substrates of both cathepsin L and cathepsin B.. Its function is as follows. Cysteine protease that plays an essential role in host liquefaction to facilitate horizontal transmission of the virus. May participate in the degradation of foreign protein expressed by the baculovirus system. This is Viral cathepsin (VCATH) from Antheraea pernyi nuclear polyhedrosis virus (ApNPV).